Here is a 330-residue protein sequence, read N- to C-terminus: Anthranilate phosphoribosyltransferase (330 aa).

Residues G79, 82 to 83 (GD), T87, 89 to 92 (NIST), 107 to 115 (KHGNYGVSS), and S119 each bind 5-phospho-alpha-D-ribose 1-diphosphate. Residue G79 participates in anthranilate binding. Mg(2+) is bound at residue S91. Anthranilate is bound at residue N110. Anthranilate is bound at residue R165. Positions 223 and 224 each coordinate Mg(2+).

The protein belongs to the anthranilate phosphoribosyltransferase family. Homodimer. Mg(2+) serves as cofactor.

The enzyme catalyses N-(5-phospho-beta-D-ribosyl)anthranilate + diphosphate = 5-phospho-alpha-D-ribose 1-diphosphate + anthranilate. Its pathway is amino-acid biosynthesis; L-tryptophan biosynthesis; L-tryptophan from chorismate: step 2/5. In terms of biological role, catalyzes the transfer of the phosphoribosyl group of 5-phosphorylribose-1-pyrophosphate (PRPP) to anthranilate to yield N-(5'-phosphoribosyl)-anthranilate (PRA). In Flavobacterium psychrophilum (strain ATCC 49511 / DSM 21280 / CIP 103535 / JIP02/86), this protein is Anthranilate phosphoribosyltransferase.